The chain runs to 1044 residues: DEMETER-like protein 3 (1044 aa).

Polar residues predominate over residues 1–15 (MLTDGSQHTYQNGET). Residues 1–107 (MLTDGSQHTY…KPRNPATTRL (107 aa)) are disordered. The span at 16-30 (KNSKEHERKCDESAH) shows a compositional bias: basic and acidic residues. Basic residues predominate over residues 38 to 53 (THKKKEKKNSKEKHGI). Positions 54–66 (KHSESEHLQDDIS) are enriched in basic and acidic residues. The span at 71-89 (GKGRRRNSKGTPKKLRFNR) shows a compositional bias: basic residues. The interval 348–445 (KVNLDPETIK…AFMSVAAKFP (98 aa)) is DEMETER. Residues Cys-678, Cys-685, Cys-688, and Cys-694 each coordinate [4Fe-4S] cluster. Positions 1024–1044 (VRRLHTPPDERGPKFMSDDDI) are disordered.

This sequence belongs to the DNA glycosylase family. DEMETER subfamily. [4Fe-4S] cluster serves as cofactor.

Its subcellular location is the nucleus. Its function is as follows. Potential transcriptional activator that may act by nicking the target promoter. Catalyzes the release of 5-methylcytosine (5-meC) from DNA by a glycosylase/lyase mechanism. The sequence is that of DEMETER-like protein 3 (DML3) from Arabidopsis thaliana (Mouse-ear cress).